Reading from the N-terminus, the 473-residue chain is uncharacterized protein (473 aa).

The signal sequence occupies residues 1–35 (MLWAHCGRFLRYHLLPLLLCRLPFLLFFQRPQWAH). 3 disordered regions span residues 142–201 (QRRR…RRRH), 232–254 (RGRL…GGAG), and 331–437 (IIPP…MTTN). Residues 155–165 (PSFPPPDPPSQ) are compositionally biased toward pro residues. Residues 168–182 (EDARDADAERAESPH) are compositionally biased toward basic and acidic residues. Residues 243 to 254 (PNTGGPRPGGAG) are compositionally biased toward gly residues. A compositionally biased stretch (basic and acidic residues) spans 341 to 397 (QNEEPRQQLTGEETRNSTHTQREEVEDVSREGAREGNDGSRASGNDERRNNAGRYDD).

The protein belongs to the HHV-5 UL13 protein family. Interacts with host MICOS complex subunits IMMT and CHCHD3.

The protein resides in the host mitochondrion. In terms of biological role, plays an essential role during infection by modulating mitochondrial ultrastructure and thereby increasing bioenergetic potential. Mechanistically, alters cristae architecture by interacting with components of the host mitochondrial contact site and cristae organizing system (MICOS) complex. This is an uncharacterized protein from Human cytomegalovirus (strain Merlin) (HHV-5).